Reading from the N-terminus, the 586-residue chain is Probable zinc metalloprotease EGY3, chloroplastic (586 aa).

A chloroplast-targeting transit peptide spans 1–54; it reads MASSSLVTSLLFSSSSSSNTATSTSSRRSFSLFSKNQYCKPRPLRRSSSRLLVR. Disordered stretches follow at residues 13 to 32 and 58 to 122; these read SSSSSSNTATSTSSRRSFSL and QQQQ…DWRS. Over residues 61-73 the composition is skewed to basic and acidic residues; that stretch reads QEEKAAPAAESHH. A coiled-coil region spans residues 103–195; it reads VKKSKEELEE…NTFKALDLNK (93 aa). The next 7 helical transmembrane spans lie at 287–307, 318–338, 389–409, 427–447, 454–474, 506–526, and 550–570; these read LSAVALAVTTFGTIAIMSGFF, VSDVLPLFAGFLSILGVSEIA, ASAYLTSVALAVSAFVSDGSL, PLLSFVQAVIGPYADELGNVL, VGVPVDPLAFAGLLGIVVTSL, VALGAGAIIGGSVLCLAWGLF, and YAWGLVLAVVCLLTLFPNGGG.

The protein belongs to the peptidase M50B family.

Its subcellular location is the plastid. It is found in the chloroplast membrane. In terms of biological role, probable membrane-associated metalloprotease that may be involved in chloroplast development. This is Probable zinc metalloprotease EGY3, chloroplastic (EGY3) from Oryza sativa subsp. japonica (Rice).